The following is a 370-amino-acid chain: DNA replication and repair protein RecF (370 aa).

ATP is bound at residue 30 to 37 (GENAQGKT).

It belongs to the RecF family.

The protein resides in the cytoplasm. Functionally, the RecF protein is involved in DNA metabolism; it is required for DNA replication and normal SOS inducibility. RecF binds preferentially to single-stranded, linear DNA. It also seems to bind ATP. This chain is DNA replication and repair protein RecF, found in Staphylococcus carnosus (strain TM300).